The following is a 347-amino-acid chain: Glycerol-1-phosphate dehydrogenase [NAD(P)+] (347 aa).

Residues 94 to 98 (GKVID) and 116 to 119 (TAAS) contribute to the NAD(+) site. Asp-121 provides a ligand contact to substrate. Residue Ser-125 coordinates NAD(+). Asp-168 is a binding site for substrate. The Zn(2+) site is built by Asp-168 and His-248. Residue His-252 coordinates substrate. Residue His-264 coordinates Zn(2+).

Belongs to the glycerol-1-phosphate dehydrogenase family. As to quaternary structure, homooctamer. Zn(2+) serves as cofactor.

Its subcellular location is the cytoplasm. The catalysed reaction is sn-glycerol 1-phosphate + NAD(+) = dihydroxyacetone phosphate + NADH + H(+). It catalyses the reaction sn-glycerol 1-phosphate + NADP(+) = dihydroxyacetone phosphate + NADPH + H(+). It functions in the pathway membrane lipid metabolism; glycerophospholipid metabolism. With respect to regulation, partially inhibited by divalent metal cations such as Co(2+), Cu(2+) and Ni(2+). Its function is as follows. Catalyzes the NAD(P)H-dependent reduction of dihydroxyacetonephosphate (DHAP or glycerone phosphate) to glycerol 1-phosphate (G1P). The G1P thus generated is used as the glycerophosphate backbone of phospholipids in the cellular membranes of Archaea. Is also able to catalyze the reverse reaction, i.e. the NAD(P)(+)-dependent oxidation of G1P but not of G3P. Is not active toward glycerol, dihydroxyacetone, glyceraldehyde-3-phosphate, glyceraldehyde and glycerol-2-phosphate. In Methanothermobacter thermautotrophicus (strain ATCC 29096 / DSM 1053 / JCM 10044 / NBRC 100330 / Delta H) (Methanobacterium thermoautotrophicum), this protein is Glycerol-1-phosphate dehydrogenase [NAD(P)+] (egsA).